Consider the following 772-residue polypeptide: E3 ubiquitin-protein ligase UHRF1 (772 aa).

The region spanning 1-77 (MWIQVRTMDG…IVQLLVRQIP (77 aa)) is the Ubiquitin-like domain. The segment at 90-111 (SDASAGCGSGQRDSDSGSGEGA) is disordered. Tudor-like regions lie at residues 129–205 (SLYK…LRAR) and 212–281 (EIKV…IEEP). Residues 291-299 (PQKRQNGPE) form a linker region. The PHD-type zinc finger occupies 297 to 364 (GPECKHCKDN…DWYCPDCRND (68 aa)). 2 histone H3R2me0 binding regions span residues 331 to 335 (CDECD) and 351 to 353 (PQD). One can recognise a YDG domain in the interval 417 to 580 (GPIPGVPVGT…FLVWRYLLRR (164 aa)). The segment at 443-444 (HV) is required to promote base flipping. Residues 461-462 (AG) and D467 contribute to the DNA site. 2 required for formation of a 5-methylcytosine-binding pocket regions span residues 464–467 (YEDD) and 476–479 (YTGS). Residues 615–626 (SKEREKENKTED) are compositionally biased toward basic and acidic residues. The segment at 615-649 (SKEREKENKTEDEPIDSPSKGKRKRNSDNEQTAAK) is disordered. The segment at 703 to 742 (CICCQEVVYEPVTTECHHNICKGCLDRSFKALVHSCPACR) adopts an RING-type zinc-finger fold.

It localises to the nucleus. It carries out the reaction S-ubiquitinyl-[E2 ubiquitin-conjugating enzyme]-L-cysteine + [acceptor protein]-L-lysine = [E2 ubiquitin-conjugating enzyme]-L-cysteine + N(6)-ubiquitinyl-[acceptor protein]-L-lysine.. It participates in protein modification; protein ubiquitination. Multidomain protein that acts as a key epigenetic regulator by bridging DNA methylation and chromatin modification. Specifically recognizes and binds hemimethylated DNA at replication forks via its YDG domain and recruits dnmt1 methyltransferase to ensure faithful propagation of the DNA methylation patterns through DNA replication. In addition to its role in maintenance of DNA methylation, also plays a key role in chromatin modification: through its tudor-like regions and PHD-type zinc fingers, specifically recognizes and binds histone H3 trimethylated at 'Lys-9' (H3K9me3) and unmethylated at 'Arg-2' (H3R2me0), respectively, and recruits chromatin proteins. Enriched in pericentric heterochromatin where it recruits different chromatin modifiers required for this chromatin replication. Also localizes to euchromatic regions where it negatively regulates transcription possibly by impacting DNA methylation and histone modifications. Has E3 ubiquitin-protein ligase activity by mediating the ubiquitination of target proteins. However, it is still unclear how E3 ubiquitin-protein ligase activity is related to its role in chromatin in vivo. The sequence is that of E3 ubiquitin-protein ligase UHRF1 (uhrf1) from Xenopus laevis (African clawed frog).